The primary structure comprises 196 residues: GTP cyclohydrolase-2 (196 aa).

Residue 49 to 53 (RVHSE) participates in GTP binding. The Zn(2+) site is built by Cys54, Cys65, and Cys67. Residues Gln70, 92 to 94 (EGR), and Thr114 each bind GTP. Residue Asp126 is the Proton acceptor of the active site. Arg128 acts as the Nucleophile in catalysis. Residues Thr149 and Lys154 each contribute to the GTP site.

Belongs to the GTP cyclohydrolase II family. As to quaternary structure, homodimer. Zn(2+) serves as cofactor.

The catalysed reaction is GTP + 4 H2O = 2,5-diamino-6-hydroxy-4-(5-phosphoribosylamino)-pyrimidine + formate + 2 phosphate + 3 H(+). The protein operates within cofactor biosynthesis; riboflavin biosynthesis; 5-amino-6-(D-ribitylamino)uracil from GTP: step 1/4. In terms of biological role, catalyzes the conversion of GTP to 2,5-diamino-6-ribosylamino-4(3H)-pyrimidinone 5'-phosphate (DARP), formate and pyrophosphate. The sequence is that of GTP cyclohydrolase-2 from Escherichia coli O127:H6 (strain E2348/69 / EPEC).